The chain runs to 295 residues: Small ribosomal subunit protein bS1 (295 aa).

3 consecutive S1 motif domains span residues 28–97 (GQLV…VSLR), 115–179 (GQTV…LSER), and 193–261 (GQLI…LSTK).

This sequence belongs to the bacterial ribosomal protein bS1 family.

Functionally, binds mRNA. The protein is Small ribosomal subunit protein bS1 (rpsA) of Synechococcus elongatus (strain ATCC 33912 / PCC 7942 / FACHB-805) (Anacystis nidulans R2).